The chain runs to 151 residues: Large ribosomal subunit protein bL9 (151 aa).

This sequence belongs to the bacterial ribosomal protein bL9 family.

Binds to the 23S rRNA. This is Large ribosomal subunit protein bL9 from Lacticaseibacillus casei (strain BL23) (Lactobacillus casei).